Here is an 887-residue protein sequence, read N- to C-terminus: 3-hydroxy-3-methylglutaryl-coenzyme A reductase (887 aa).

Residues 1–9 lie on the Cytoplasmic side of the membrane; it reads MLSRLFRMH. Residues 10–39 traverse the membrane as a helical segment; it reads GLFVASHPWEVIVGTVTLTICMMSMNMFTG. Residues 40–56 are Lumenal-facing; the sequence is NNKICGWNYECPKFEED. The helical transmembrane segment at 57–78 threads the bilayer; the sequence is VLSSDIIILTITRCIAILYIYF. Residues 61–218 enclose the SSD domain; the sequence is DIIILTITRC…MTFFPACVSL (158 aa). The INSIG-binding motif signature appears at 75 to 78; it reads YIYF. Over 79–89 the chain is Cytoplasmic; that stretch reads QFQNLRQLGSK. K89 participates in a covalent cross-link: Glycyl lysine isopeptide (Lys-Gly) (interchain with G-Cter in ubiquitin). Residues 90–114 form a helical membrane-spanning segment; that stretch reads YILGIAGLFTIFSSFVFSTVVIHFL. The Lumenal segment spans residues 115 to 123; sequence DKELTGLNE. A helical transmembrane segment spans residues 124–149; that stretch reads ALPFFLLLIDLSRASALAKFALSSNS. The Cytoplasmic portion of the chain corresponds to 150-159; it reads QDEVRENIAR. Residues 160–187 traverse the membrane as a helical segment; that stretch reads GMAILGPTFTLDALVECLVIGVGTMSGV. The Lumenal segment spans residues 188 to 191; it reads RQLE. Residues 192-220 traverse the membrane as a helical segment; that stretch reads IMCCFGCMSVLANYFVFMTFFPACVSLVL. Over 221–248 the chain is Cytoplasmic; that stretch reads ELSRESREGRPIWQLSHFARVLEEEENK. K248 is covalently cross-linked (Glycyl lysine isopeptide (Lys-Gly) (interchain with G-Cter in ubiquitin)). Residues 249 to 275 traverse the membrane as a helical segment; it reads PNPVTQRVKMIMSLGLVLVHAHSRWIA. Residues 276-314 are Lumenal-facing; sequence DPSPQNSTTEHSKVSLGLDEDVSKRIEPSVSLWQFYLSK. N281 carries N-linked (GlcNAc...) asparagine glycosylation. A helical membrane pass occupies residues 315–339; the sequence is MISMDIEQVVTLSLAFLLAVKYIFF. Over 340–887 the chain is Cytoplasmic; the sequence is EQAETESTLS…LQGTCTKKSA (548 aa). Active-site charge relay system residues include E558, K690, and D766. H865 acts as the Proton donor in catalysis. Position 871 is a phosphoserine; by AMPK (S871).

This sequence belongs to the HMG-CoA reductase family. Homotetramer. Homodimer. Interacts (via its SSD) with INSIG1; the interaction, accelerated by sterols, leads to the recruitment of HMGCR to AMFR/gp78 for its ubiquitination by the sterol-mediated ERAD pathway. Interacts with UBIAD1. Post-translationally, N-glycosylated. Glycosylated with high mannose chains including Man(6)(GlcNAc)(2), Man(7)(GlcNAc)(2) and Man(8)(GlcNAc)(2). Deglycosylated by NGLY1 on release from the endoplasmic reticulum (ER) in a sterol-mediated manner. Undergoes sterol-mediated ubiquitination and ER-associated degradation (ERAD). Accumulation of sterols in the endoplasmic reticulum (ER) membrane, triggers binding of the reductase to the ER membrane protein INSIG1 or INSIG2. The INSIG1 binding leads to the recruitment of the ubiquitin ligase, AMFR/gp78, RNF139 or RNF145, initiating ubiquitination of the reductase. The ubiquitinated reductase is then extracted from the ER membrane and delivered to cytosolic 26S proteosomes by a mechanism probably mediated by the ATPase Valosin-containing protein VCP/p97. The INSIG2-binding leads to the recruitment of the ubiquitin ligase RNF139, initiating ubiquitination of the reductase. Lys-248 is the main site of ubiquitination. Ubiquitination is enhanced by the presence of a geranylgeranylated protein. In terms of processing, phosphorylated. Phosphorylation at Ser-871 reduces the catalytic activity.

It is found in the endoplasmic reticulum membrane. The protein localises to the peroxisome membrane. The enzyme catalyses (R)-mevalonate + 2 NADP(+) + CoA = (3S)-3-hydroxy-3-methylglutaryl-CoA + 2 NADPH + 2 H(+). The protein operates within metabolic intermediate biosynthesis; (R)-mevalonate biosynthesis; (R)-mevalonate from acetyl-CoA: step 3/3. Its activity is regulated as follows. Regulated by a negative feedback mechanism through sterols and non-sterol metabolites derived from mevalonate. Phosphorylation at Ser-871 down-regulates the catalytic activity. In terms of biological role, catalyzes the conversion of (3S)-hydroxy-3-methylglutaryl-CoA (HMG-CoA) to mevalonic acid, the rate-limiting step in the synthesis of cholesterol and other isoprenoids, thus plays a critical role in cellular cholesterol homeostasis. The chain is 3-hydroxy-3-methylglutaryl-coenzyme A reductase (HMGCR) from Cricetulus griseus (Chinese hamster).